The primary structure comprises 79 residues: MORN repeat-containing protein 2 (79 aa).

MORN repeat units lie at residues 15–36 (YEGQ…PNGA) and 38–55 (YTGN…EYTD).

Its subcellular location is the cytoplasmic vesicle. It is found in the secretory vesicle. It localises to the acrosome. The protein resides in the nucleus. Might have a role in spermatogenesis. The protein is MORN repeat-containing protein 2 of Homo sapiens (Human).